We begin with the raw amino-acid sequence, 100 residues long: Urease subunit gamma (100 aa).

This sequence belongs to the urease gamma subunit family. In terms of assembly, heterotrimer of UreA (gamma), UreB (beta) and UreC (alpha) subunits. Three heterotrimers associate to form the active enzyme.

Its subcellular location is the cytoplasm. It catalyses the reaction urea + 2 H2O + H(+) = hydrogencarbonate + 2 NH4(+). The protein operates within nitrogen metabolism; urea degradation; CO(2) and NH(3) from urea (urease route): step 1/1. This is Urease subunit gamma from Hahella chejuensis (strain KCTC 2396).